The following is a 393-amino-acid chain: S-adenosylmethionine synthase 2 (393 aa).

E9 contacts Mg(2+). An ATP-binding site is contributed by H15. K(+) is bound at residue E43. L-methionine is bound by residues E56 and Q99. ATP-binding positions include 167-169, 235-238, D246, 252-253, A269, K273, and K277; these read DGK, SGRF, and RK. Position 246 (D246) interacts with L-methionine. K277 provides a ligand contact to L-methionine.

This sequence belongs to the AdoMet synthase family. In terms of assembly, homotetramer. It depends on Mn(2+) as a cofactor. The cofactor is Mg(2+). Co(2+) is required as a cofactor. K(+) serves as cofactor.

It localises to the cytoplasm. The enzyme catalyses L-methionine + ATP + H2O = S-adenosyl-L-methionine + phosphate + diphosphate. Its pathway is amino-acid biosynthesis; S-adenosyl-L-methionine biosynthesis; S-adenosyl-L-methionine from L-methionine: step 1/1. Catalyzes the formation of S-adenosylmethionine from methionine and ATP. The reaction comprises two steps that are both catalyzed by the same enzyme: formation of S-adenosylmethionine (AdoMet) and triphosphate, and subsequent hydrolysis of the triphosphate. The polypeptide is S-adenosylmethionine synthase 2 (SAMS2) (Elaeagnus umbellata (Autumn olive)).